We begin with the raw amino-acid sequence, 152 residues long: Protein CHLOROPLAST VESICULATION (152 aa).

The transit peptide at 1–22 directs the protein to the chloroplast; sequence MAGRISCCLNLPPLDSNSAQSL. Residues 48–65 traverse the membrane as a helical segment; it reads CSFVLGVAATVVIGGIQI. The interval 92-152 is important for chloroplast destabilization and the formation of CV-containing vesicles; sequence RWSDKRTCPP…RVNRGGCFSV (61 aa).

Interacts with the photosystem II subunit PsbO1 via its C-terminal region in the chloroplast thylakoid membrane and in CV-containing vesicles (CCVs). As to expression, mostly expressed in senescent and mature leaves but not in young leaves.

The protein resides in the plastid. It localises to the chloroplast membrane. Its subcellular location is the chloroplast thylakoid membrane. The protein localises to the chloroplast envelope. It is found in the vacuole. The protein resides in the vesicle. In terms of biological role, triggers stress-induced chloroplast degradation, independently of autophagy and senescence-associated vacuoles. After targeting to the chloroplast, triggers its destabilization and subsequent disassembly, inducing the formation of CV-containing vesicles (CCVs) carrying stromal proteins, envelope membrane proteins, and thylakoid membrane proteins which are released from the chloroplasts and mobilized to the vacuole for proteolysis. This Arabidopsis thaliana (Mouse-ear cress) protein is Protein CHLOROPLAST VESICULATION.